We begin with the raw amino-acid sequence, 174 residues long: Large ribosomal subunit protein uL10 (174 aa).

It belongs to the universal ribosomal protein uL10 family. In terms of assembly, part of the ribosomal stalk of the 50S ribosomal subunit. The N-terminus interacts with L11 and the large rRNA to form the base of the stalk. The C-terminus forms an elongated spine to which L12 dimers bind in a sequential fashion forming a multimeric L10(L12)X complex.

In terms of biological role, forms part of the ribosomal stalk, playing a central role in the interaction of the ribosome with GTP-bound translation factors. The sequence is that of Large ribosomal subunit protein uL10 from Anaeromyxobacter sp. (strain K).